Reading from the N-terminus, the 768-residue chain is P-selectin (768 aa).

A signal peptide spans 1 to 41 (MAGCPKGSWTPRLRSVILGGAQLIWFSALISELVNQKEVAA). Over 42-709 (WTYNYSTKAY…QAGTLTIQEA (668 aa)) the chain is Extracellular. A C-type lectin domain is found at 58–158 (VFCRRHFTDL…PCFKRKRALC (101 aa)). Cystine bridges form between cysteine 60–cysteine 158, cysteine 131–cysteine 150, cysteine 163–cysteine 174, cysteine 168–cysteine 183, cysteine 185–cysteine 194, cysteine 200–cysteine 244, cysteine 230–cysteine 257, cysteine 262–cysteine 306, cysteine 292–cysteine 319, cysteine 324–cysteine 368, cysteine 354–cysteine 381, cysteine 386–cysteine 430, cysteine 416–cysteine 443, cysteine 448–cysteine 492, cysteine 478–cysteine 505, cysteine 510–cysteine 554, cysteine 540–cysteine 567, cysteine 580–cysteine 624, cysteine 610–cysteine 637, cysteine 642–cysteine 686, and cysteine 672–cysteine 699. 3 residues coordinate Ca(2+): glutamate 121, asparagine 123, and asparagine 124. Asparagine 123 provides a ligand contact to a carbohydrate. The a carbohydrate site is built by glutamate 133 and asparagine 146. Ca(2+) is bound by residues asparagine 146 and aspartate 147. An EGF-like domain is found at 159 to 195 (YTASCQDMSCSNQGECIETIGSYTCSCYPGFYGPECE). Sushi domains follow at residues 198-259 (KECG…KCDA), 260-321 (VQCQ…TCEA), 322-383 (IACE…FCEA), 384-445 (LQCP…ECQA), 446-507 (VSCA…TCEA), 508-569 (IKCP…TCKG), 578-639 (VRCP…MCRA), and 640-701 (VKCS…TCQA). The N-linked (GlcNAc...) asparagine glycan is linked to asparagine 398. N-linked (GlcNAc...) asparagine glycosylation is present at asparagine 603. N-linked (GlcNAc...) asparagine glycosylation is found at asparagine 654, asparagine 661, and asparagine 679. The helical transmembrane segment at 710 to 733 (LTYLGGAVASTTGLAVGGTLLALL) threads the bilayer. Residues 734 to 768 (RKRLRKKDDGKCPLNPHSHLGTYGVFTNAAYDPTP) lie on the Cytoplasmic side of the membrane. A lipid anchor (S-palmitoyl cysteine; alternate) is attached at cysteine 745. The S-stearoyl cysteine; alternate moiety is linked to residue cysteine 745. The short motif at 756-759 (YGVF) is the Endocytosis signal element. Residues 759–768 (FTNAAYDPTP) are interaction with SNX17.

It belongs to the selectin/LECAM family. As to quaternary structure, interacts with SNX17. Interacts with SELPLG/PSGL1 and PODXL2 and mediates neutrophil adhesion and leukocyte rolling. This interaction requires the sialyl-Lewis X epitope of SELPLG and PODXL2, and specific tyrosine sulfation on SELPLG. Interacts (via C-type lectin domain) with alpha-IIb/beta3 integrin ITGA2B:ITGB3 and alpha-V/beta-3 integrin ITGAV:ITGB3. Interacts with alpha5/beta1 integrin ITGA5:ITGB1 and alpha4/beta1 integrin ITGA4:ITGB. In terms of tissue distribution, stored in the alpha-granules of platelets and Weibel-Palade bodies of endothelial cells. Upon cell activation by agonists, P-selectin is transported rapidly to the cell surface.

The protein resides in the cell membrane. Ca(2+)-dependent receptor for myeloid cells that binds to carbohydrates on neutrophils and monocytes. Mediates the interaction of activated endothelial cells or platelets with leukocytes. The ligand recognized is sialyl-Lewis X. Mediates rapid rolling of leukocyte rolling over vascular surfaces during the initial steps in inflammation through interaction with SELPLG. Mediates cell-cell interactions and cell adhesion via the interaction with integrin alpha-IIb/beta3 (ITGA2B:ITGB3) and integrin alpha-V/beta-3 (ITGAV:ITGB3). This is P-selectin (Selp) from Mus musculus (Mouse).